The chain runs to 447 residues: Methyl-coenzyme M reductase I subunit beta (447 aa).

A coenzyme M-binding site is contributed by Y371. G373 lines the coenzyme B pocket.

This sequence belongs to the methyl-coenzyme M reductase beta subunit family. In terms of assembly, MCR is a hexamer of two alpha, two beta, and two gamma chains, forming a dimer of heterotrimers. The cofactor is coenzyme F430.

The protein localises to the cytoplasm. It catalyses the reaction coenzyme B + methyl-coenzyme M = methane + coenzyme M-coenzyme B heterodisulfide. It functions in the pathway one-carbon metabolism; methyl-coenzyme M reduction; methane from methyl-coenzyme M: step 1/1. In terms of biological role, component of the methyl-coenzyme M reductase (MCR) I that catalyzes the reductive cleavage of methyl-coenzyme M (CoM-S-CH3 or 2-(methylthio)ethanesulfonate) using coenzyme B (CoB or 7-mercaptoheptanoylthreonine phosphate) as reductant which results in the production of methane and the mixed heterodisulfide of CoB and CoM (CoM-S-S-CoB). This is the final step in methanogenesis. The protein is Methyl-coenzyme M reductase I subunit beta (mcrB) of Methanocaldococcus jannaschii (strain ATCC 43067 / DSM 2661 / JAL-1 / JCM 10045 / NBRC 100440) (Methanococcus jannaschii).